Reading from the N-terminus, the 184-residue chain is ATP synthase subunit b, chloroplastic (184 aa).

Residues 27-49 (LATNLINLSVVLGVLIFFGKGVL) traverse the membrane as a helical segment.

Belongs to the ATPase B chain family. F-type ATPases have 2 components, F(1) - the catalytic core - and F(0) - the membrane proton channel. F(1) has five subunits: alpha(3), beta(3), gamma(1), delta(1), epsilon(1). F(0) has four main subunits: a(1), b(1), b'(1) and c(10-14). The alpha and beta chains form an alternating ring which encloses part of the gamma chain. F(1) is attached to F(0) by a central stalk formed by the gamma and epsilon chains, while a peripheral stalk is formed by the delta, b and b' chains.

It localises to the plastid. It is found in the chloroplast thylakoid membrane. Its function is as follows. F(1)F(0) ATP synthase produces ATP from ADP in the presence of a proton or sodium gradient. F-type ATPases consist of two structural domains, F(1) containing the extramembraneous catalytic core and F(0) containing the membrane proton channel, linked together by a central stalk and a peripheral stalk. During catalysis, ATP synthesis in the catalytic domain of F(1) is coupled via a rotary mechanism of the central stalk subunits to proton translocation. Component of the F(0) channel, it forms part of the peripheral stalk, linking F(1) to F(0). The chain is ATP synthase subunit b, chloroplastic from Liriodendron tulipifera (Tuliptree).